The following is a 188-amino-acid chain: Peptide deformylase (188 aa).

Positions 109 and 152 each coordinate Fe cation. The active site involves Glu153. Fe cation is bound at residue His156.

Belongs to the polypeptide deformylase family. Fe(2+) serves as cofactor.

It carries out the reaction N-terminal N-formyl-L-methionyl-[peptide] + H2O = N-terminal L-methionyl-[peptide] + formate. In terms of biological role, removes the formyl group from the N-terminal Met of newly synthesized proteins. Requires at least a dipeptide for an efficient rate of reaction. N-terminal L-methionine is a prerequisite for activity but the enzyme has broad specificity at other positions. This is Peptide deformylase from Chloroflexus aurantiacus (strain ATCC 29366 / DSM 635 / J-10-fl).